The following is a 144-amino-acid chain: Nucleoside diphosphate kinase (144 aa).

6 residues coordinate ATP: Lys11, Phe59, Arg87, Thr93, Arg104, and Asn114. His117 serves as the catalytic Pros-phosphohistidine intermediate.

The protein belongs to the NDK family. Homotetramer. Mg(2+) serves as cofactor.

It localises to the cytoplasm. It carries out the reaction a 2'-deoxyribonucleoside 5'-diphosphate + ATP = a 2'-deoxyribonucleoside 5'-triphosphate + ADP. The catalysed reaction is a ribonucleoside 5'-diphosphate + ATP = a ribonucleoside 5'-triphosphate + ADP. Functionally, major role in the synthesis of nucleoside triphosphates other than ATP. The ATP gamma phosphate is transferred to the NDP beta phosphate via a ping-pong mechanism, using a phosphorylated active-site intermediate. In Aliivibrio fischeri (strain ATCC 700601 / ES114) (Vibrio fischeri), this protein is Nucleoside diphosphate kinase.